Here is a 506-residue protein sequence, read N- to C-terminus: CTL-like protein DDB_G0269978 (506 aa).

N-linked (GlcNAc...) asparagine glycans are attached at residues N15 and N41. A run of 12 helical transmembrane segments spans residues 91–111, 126–146, 161–181, 182–202, 226–246, 256–276, 279–299, 323–343, 345–367, 371–393, 416–436, and 447–467; these read LLYS…TVIA, LQGL…FLIW, SFFS…GNGW, YSWA…YFAF, TLLV…IWLF, SYWT…LYWT, VITY…YFFA, FGSI…QFIC, GFAR…ALIF, LYTF…CNSS, ITML…VTMI, and WLYV…DIIF.

The protein belongs to the CTL (choline transporter-like) family.

The protein resides in the membrane. The sequence is that of CTL-like protein DDB_G0269978 from Dictyostelium discoideum (Social amoeba).